The primary structure comprises 316 residues: Olfactory receptor 6B9 (316 aa).

The Extracellular portion of the chain corresponds to 1–22 (MENITNISEFILMGFPTAPWLQ). N-linked (GlcNAc...) asparagine glycosylation is found at Asn3 and Asn6. Residues 23–43 (ILLFSIFFITYVFVLLENLVI) form a helical membrane-spanning segment. Residues 44-64 (ILTVWVTGSLHKPMYYFLSTM) lie on the Cytoplasmic side of the membrane. Residues 65 to 85 (SFLEAWYISVTVPKMLAGFLF) form a helical membrane-spanning segment. The Extracellular portion of the chain corresponds to 86 to 97 (RPNTISFLGCMT). The cysteines at positions 95 and 187 are disulfide-linked. A helical membrane pass occupies residues 98 to 118 (QLYFFMSLACTECVLLAAMAY). At 119 to 132 (DRYVAICWPLRYPV) the chain is on the cytoplasmic side. A helical transmembrane segment spans residues 133–153 (MMTTGFCVQLTISSWVSGFTI). Topologically, residues 154–199 (SMAKVYFISRVAFCGNNVLNHFFCDVSPILKLACMNLSMAETVDFA) are extracellular. A helical membrane pass occupies residues 200 to 220 (LAIVILIFPLSATVLSYGFIV). At 221 to 237 (STVLQIPSATGQRKAFS) the chain is on the cytoplasmic side. Residues 238–258 (TCASHLTVVVIFYTAVIFMYV) form a helical membrane-spanning segment. The Extracellular portion of the chain corresponds to 259–269 (RPRAIASFNSN). A helical transmembrane segment spans residues 270-290 (KLISAIYAVFTPMLNPIIYCL). The Cytoplasmic portion of the chain corresponds to 291–316 (RNKEVKDAIRKTIAGGRAPALGESIS).

It belongs to the G-protein coupled receptor 1 family. Olfactory epithelium.

It is found in the cell membrane. Odorant receptor. The sequence is that of Olfactory receptor 6B9 from Mus musculus (Mouse).